Consider the following 687-residue polypeptide: Tripartite terminase subunit 3 (687 aa).

The interval 67 to 91 (HHPATPTSANPDVGTPRPSEDNVPA) is disordered. Residues 221-228 (IPRRHGKT) carry the Walker A motif motif. Residues 316-321 (LLYVDE) carry the Walker B motif motif. Glutamate 321 functions as the For ATPase activity in the catalytic mechanism. Residues aspartate 476, glutamate 550, and aspartate 662 each act as for nuclease activity in the active site.

Belongs to the herpesviridae TRM3 protein family. Interacts with the terminase subunits TRM1 and TRM2. Interacts with portal protein.

Its subcellular location is the host nucleus. Functionally, component of the molecular motor that translocates viral genomic DNA in empty capsid during DNA packaging. Forms a tripartite terminase complex together with TRM1 and TRM2 in the host cytoplasm. Once the complex reaches the host nucleus, it interacts with the capsid portal vertex. This portal forms a ring in which genomic DNA is translocated into the capsid. TRM3 carries an RNase H-like nuclease activity that plays an important role for the cleavage of concatemeric viral DNA into unit length genomes. This chain is Tripartite terminase subunit 3, found in Human herpesvirus 8 type P (isolate GK18) (HHV-8).